The following is a 428-amino-acid chain: Glutamyl-tRNA reductase (428 aa).

Substrate-binding positions include 55 to 58, S114, 119 to 121, and Q125; these read TCNR and ETQ. Catalysis depends on C56, which acts as the Nucleophile. 194 to 199 is an NADP(+) binding site; it reads GAGEMI.

Belongs to the glutamyl-tRNA reductase family. In terms of assembly, homodimer.

It carries out the reaction (S)-4-amino-5-oxopentanoate + tRNA(Glu) + NADP(+) = L-glutamyl-tRNA(Glu) + NADPH + H(+). It participates in porphyrin-containing compound metabolism; protoporphyrin-IX biosynthesis; 5-aminolevulinate from L-glutamyl-tRNA(Glu): step 1/2. Catalyzes the NADPH-dependent reduction of glutamyl-tRNA(Glu) to glutamate 1-semialdehyde (GSA). The sequence is that of Glutamyl-tRNA reductase from Paraburkholderia phytofirmans (strain DSM 17436 / LMG 22146 / PsJN) (Burkholderia phytofirmans).